The sequence spans 478 residues: Cytochrome P450 monooxygenase asqL (478 aa).

A heme-binding site is contributed by cysteine 407.

This sequence belongs to the cytochrome P450 family. The cofactor is heme.

It functions in the pathway secondary metabolite biosynthesis. The protein operates within alkaloid biosynthesis. It participates in mycotoxin biosynthesis. In terms of biological role, cytochrome P450 monooxygenase; part of the gene cluster that mediates the biosynthesis of the aspoquinolone mycotoxins. The role of asqL within the aspoquinolone pathway has still to be determined. The first step of the pathway is catalyzed by the nonribosomal peptide synthetase asqK that condenses anthranilic acid and O-methyl-L-tyrosine to produce 4'-methoxycyclopeptin. 4'-methoxycyclopeptin is then converted to 4'-methoxydehydrocyclopeptin by the ketoglutarate-dependent dioxygenase asqJ. AsqJ also converts its first product 4'-methoxydehydrocyclopeptin to 4'-methoxycyclopenin. The following conversion of 4'-methoxycyclopenin into 4'-methoxyviridicatin is catalyzed by the cyclopenase asqI. 4'-methoxyviridicatin is the precursor of quinolone natural products, and is further converted to quinolinone B. The prenyltransferase asqH1 then catalyzes the canonical Friedel-Crafts alkylation of quinolinone B with dimethylallyl cation to yield dimethylallyl quinolone, which is subjected to FAD-dependent dehydrogenation by the FAD-linked oxidoreductase asqF to yield conjugated aryl diene. The delta(3') double bond then serves as the site of the second alkylation with DMAPP catalyzed by the prenyltransferase asqH2 to yield a carbenium ion intermediate, which can be attacked by H(2)O to yield a styrenyl quinolone containing a C3'-hydroxyprenyl chain. The FAD-dependent monooxygenase asqG performs epoxidation of the terminal C7'-C8' olefin. Finally, after dehydratation of the epoxide at C3 by asqC, the quinolone epoxide rearrangement protein asqO catalyzes an enzymatic 3-exo-tet cyclization to yield the cyclopropyl-THF ring system in aspoquinolone. This Emericella nidulans (strain FGSC A4 / ATCC 38163 / CBS 112.46 / NRRL 194 / M139) (Aspergillus nidulans) protein is Cytochrome P450 monooxygenase asqL.